We begin with the raw amino-acid sequence, 370 residues long: Coproporphyrin III ferrochelatase (370 aa).

2 residues coordinate Fe-coproporphyrin III: Ser58 and Tyr127. Fe(2+) contacts are provided by His189 and Glu276.

It belongs to the ferrochelatase family.

The protein resides in the cytoplasm. It carries out the reaction Fe-coproporphyrin III + 2 H(+) = coproporphyrin III + Fe(2+). It functions in the pathway porphyrin-containing compound metabolism; protoheme biosynthesis. Its function is as follows. Involved in coproporphyrin-dependent heme b biosynthesis. Catalyzes the insertion of ferrous iron into coproporphyrin III to form Fe-coproporphyrin III. This Corynebacterium glutamicum (strain R) protein is Coproporphyrin III ferrochelatase.